A 184-amino-acid chain; its full sequence is MTIMSDKWIREQATKNGMIEPFVEAQRRDGCISYGLSSYGYDARVAPEFKIFTNVDSATVDPKDFASNSFVDRETDVCIIPPNSFALARTVEYFRVPRDVLVICLGKSTYARCGIIVNVTPLEPGWEGHVTLEFSNTTPLPAKIYANEGACQFLFLQGNEPCEISYADRAGKYMGQQGVTLPRL.

DCTP contacts are provided by residues 107–112 (KSTYAR), 131–133 (TLE), Gln-152, Tyr-166, and Gln-176. Glu-133 (proton donor/acceptor) is an active-site residue.

This sequence belongs to the dCTP deaminase family. As to quaternary structure, homotrimer.

The catalysed reaction is dCTP + H2O + H(+) = dUTP + NH4(+). It functions in the pathway pyrimidine metabolism; dUMP biosynthesis; dUMP from dCTP (dUTP route): step 1/2. Its function is as follows. Catalyzes the deamination of dCTP to dUTP. This chain is dCTP deaminase, found in Rhizorhabdus wittichii (strain DSM 6014 / CCUG 31198 / JCM 15750 / NBRC 105917 / EY 4224 / RW1) (Sphingomonas wittichii).